An 858-amino-acid chain; its full sequence is Protein translocase subunit SecA (858 aa).

Residues Gln85, 103–107 (GEGKT), and Asp511 each bind ATP. Zn(2+) is bound by residues Cys840, Cys842, Cys851, and Cys852.

Belongs to the SecA family. As to quaternary structure, monomer and homodimer. Part of the essential Sec protein translocation apparatus which comprises SecA, SecYEG and auxiliary proteins SecDF. Other proteins may also be involved. It depends on Zn(2+) as a cofactor.

It is found in the cell membrane. Its subcellular location is the cytoplasm. The catalysed reaction is ATP + H2O + cellular proteinSide 1 = ADP + phosphate + cellular proteinSide 2.. Its function is as follows. Part of the Sec protein translocase complex. Interacts with the SecYEG preprotein conducting channel. Has a central role in coupling the hydrolysis of ATP to the transfer of proteins into and across the cell membrane, serving as an ATP-driven molecular motor driving the stepwise translocation of polypeptide chains across the membrane. This Lachnoclostridium phytofermentans (strain ATCC 700394 / DSM 18823 / ISDg) (Clostridium phytofermentans) protein is Protein translocase subunit SecA.